We begin with the raw amino-acid sequence, 304 residues long: Non-specific ribonucleoside hydrolase RihC (304 aa).

His-233 is a catalytic residue.

This sequence belongs to the IUNH family. RihC subfamily.

Hydrolyzes both purine and pyrimidine ribonucleosides with a broad-substrate specificity. The sequence is that of Non-specific ribonucleoside hydrolase RihC from Escherichia coli O127:H6 (strain E2348/69 / EPEC).